The primary structure comprises 266 residues: PTS system sorbose-specific EIIC component (266 aa).

Positions 1-237 (MEISTLQIIA…GGVGVIIALI (237 aa)) constitute a PTS EIIC type-4 domain. Transmembrane regions (helical) follow at residues 3-23 (ISTL…MGSV), 33-53 (LIAC…VMLG), 79-99 (IISA…IAIA), 100-120 (LPVA…TVVF), 151-171 (VAIP…SSML), 183-203 (QIAG…MMGV), and 219-239 (YLDF…LIYI).

The protein resides in the cell inner membrane. Its function is as follows. The phosphoenolpyruvate-dependent sugar phosphotransferase system (PTS), a major carbohydrate active transport system, catalyzes the phosphorylation of incoming sugar substrates concomitant with their translocation across the cell membrane. The enzyme II SorABFM PTS system is involved in L-sorbose transport. The chain is PTS system sorbose-specific EIIC component from Klebsiella pneumoniae.